Reading from the N-terminus, the 334-residue chain is DnaJ protein homolog 1 (334 aa).

One can recognise a J domain in the interval 4-68 (DFYKILGLER…KKRDIFDNYG (65 aa)). A Phosphoserine modification is found at S187.

The protein resides in the cytoplasm. This chain is DnaJ protein homolog 1 (DnaJ-1), found in Drosophila melanogaster (Fruit fly).